A 501-amino-acid chain; its full sequence is Dynein regulatory complex subunit 5 (501 aa).

Residues 1–23 (MQETVTTSALLDPSHSSVSTQDK) show a composition bias toward polar residues. Disordered stretches follow at residues 1 to 56 (MQET…HPGA) and 203 to 222 (PAQL…EMEE). The segment covering 24 to 34 (SSTGGHTSSTG) has biased composition (low complexity). A compositionally biased stretch (polar residues) spans 35–49 (PQPSKPSITPVSAKS). 5 LRR repeats span residues 308 to 321 (VLEE…LIGD), 335 to 355 (RLRV…QSLA), 363 to 383 (NLIS…QALA), 391 to 411 (CLTT…TLLS), and 419 to 439 (TLTS…KQLL).

This sequence belongs to the DRC5 family. Component of the nexin-dynein regulatory complex (N-DRC). Interacts with DRC1. Interacts with FBXL13/DRC6, DRC3 and DRC7.

It is found in the cell projection. The protein localises to the cilium. Its subcellular location is the flagellum. It localises to the cytoplasm. The protein resides in the cytoskeleton. It is found in the flagellum axoneme. Component of the nexin-dynein regulatory complex (N-DRC) a key regulator of ciliary/flagellar motility which maintains the alignment and integrity of the distal axoneme and regulates microtubule sliding in motile axonemes. May play a role in the assembly of N-DRC. May be required for sperm motility. The protein is Dynein regulatory complex subunit 5 (TCTE1) of Macaca fascicularis (Crab-eating macaque).